Here is a 185-residue protein sequence, read N- to C-terminus: Transcription termination/antitermination protein NusG (185 aa).

One can recognise a KOW domain in the interval 134–163; it reads VGQQVRIVEGPFATFSGEVEEVMSERNKVR.

It belongs to the NusG family.

Functionally, participates in transcription elongation, termination and antitermination. This Treponema pallidum (strain Nichols) protein is Transcription termination/antitermination protein NusG.